The chain runs to 248 residues: tRNA (guanine-N(1)-)-methyltransferase (248 aa).

S-adenosyl-L-methionine-binding positions include G113 and 133–138 (VGDYVL).

Belongs to the RNA methyltransferase TrmD family. As to quaternary structure, homodimer.

The protein localises to the cytoplasm. It carries out the reaction guanosine(37) in tRNA + S-adenosyl-L-methionine = N(1)-methylguanosine(37) in tRNA + S-adenosyl-L-homocysteine + H(+). In terms of biological role, specifically methylates guanosine-37 in various tRNAs. This Shewanella sp. (strain ANA-3) protein is tRNA (guanine-N(1)-)-methyltransferase.